A 246-amino-acid chain; its full sequence is NAD-dependent protein deacylase (246 aa).

The Deacetylase sirtuin-type domain occupies 1 to 246; sequence MDLSQARAAL…RGLELLLEDD (246 aa). 21–41 is an NAD(+) binding site; that stretch reads GAGISAESGIPTFRDAQTGHW. Residues tyrosine 66 and arginine 69 each contribute to the substrate site. 101–104 contributes to the NAD(+) binding site; sequence QNVD. Histidine 123 acts as the Proton acceptor in catalysis. NAD(+) contacts are provided by residues 191-193, 217-219, and alanine 235; these read GTS and NPE.

This sequence belongs to the sirtuin family. Class III subfamily.

The protein resides in the cytoplasm. The enzyme catalyses N(6)-acetyl-L-lysyl-[protein] + NAD(+) + H2O = 2''-O-acetyl-ADP-D-ribose + nicotinamide + L-lysyl-[protein]. It carries out the reaction N(6)-succinyl-L-lysyl-[protein] + NAD(+) + H2O = 2''-O-succinyl-ADP-D-ribose + nicotinamide + L-lysyl-[protein]. NAD-dependent lysine deacetylase and desuccinylase that specifically removes acetyl and succinyl groups on target proteins. Modulates the activities of several proteins which are inactive in their acylated form. The chain is NAD-dependent protein deacylase from Deinococcus radiodurans (strain ATCC 13939 / DSM 20539 / JCM 16871 / CCUG 27074 / LMG 4051 / NBRC 15346 / NCIMB 9279 / VKM B-1422 / R1).